Consider the following 1294-residue polypeptide: Phosphoribosylformylglycinamidine synthase (1294 aa).

Residues 303-325 (WPGAATGSGGEIRDEGATGRGSK) form a disordered region. ATP-binding positions include 305 to 316 (GAATGSGGEIRD), 384 to 386 (TGY), and Ala-676. Residues Asp-677, Glu-716, Asn-720, and Asp-883 each coordinate Mg(2+). Ser-885 is an ATP binding site. The 254-residue stretch at 1041–1294 (VAVLREQGVN…MFRNARRQLG (254 aa)) folds into the Glutamine amidotransferase type-1 domain. The active-site Nucleophile is the Cys-1134. Catalysis depends on residues His-1259 and Glu-1261.

In the N-terminal section; belongs to the FGAMS family. Monomer.

It localises to the cytoplasm. It carries out the reaction N(2)-formyl-N(1)-(5-phospho-beta-D-ribosyl)glycinamide + L-glutamine + ATP + H2O = 2-formamido-N(1)-(5-O-phospho-beta-D-ribosyl)acetamidine + L-glutamate + ADP + phosphate + H(+). It participates in purine metabolism; IMP biosynthesis via de novo pathway; 5-amino-1-(5-phospho-D-ribosyl)imidazole from N(2)-formyl-N(1)-(5-phospho-D-ribosyl)glycinamide: step 1/2. Functionally, phosphoribosylformylglycinamidine synthase involved in the purines biosynthetic pathway. Catalyzes the ATP-dependent conversion of formylglycinamide ribonucleotide (FGAR) and glutamine to yield formylglycinamidine ribonucleotide (FGAM) and glutamate. In Pectobacterium atrosepticum (strain SCRI 1043 / ATCC BAA-672) (Erwinia carotovora subsp. atroseptica), this protein is Phosphoribosylformylglycinamidine synthase.